The chain runs to 528 residues: ATP synthase subunit alpha 1 (528 aa).

169–176 lines the ATP pocket; it reads GDRQTGKT.

This sequence belongs to the ATPase alpha/beta chains family. As to quaternary structure, F-type ATPases have 2 components, CF(1) - the catalytic core - and CF(0) - the membrane proton channel. CF(1) has five subunits: alpha(3), beta(3), gamma(1), delta(1), epsilon(1). CF(0) has three main subunits: a(1), b(2) and c(9-12). The alpha and beta chains form an alternating ring which encloses part of the gamma chain. CF(1) is attached to CF(0) by a central stalk formed by the gamma and epsilon chains, while a peripheral stalk is formed by the delta and b chains.

It is found in the cell membrane. It carries out the reaction ATP + H2O + 4 H(+)(in) = ADP + phosphate + 5 H(+)(out). Produces ATP from ADP in the presence of a proton gradient across the membrane. The alpha chain is a regulatory subunit. This chain is ATP synthase subunit alpha 1, found in Mycoplasmopsis pulmonis (strain UAB CTIP) (Mycoplasma pulmonis).